The chain runs to 256 residues: 7-cyano-7-deazaguanine synthase (256 aa).

The disordered stretch occupies residues 1-22 (MTDASADALTSPSNSGASQDTS). The span at 8–22 (ALTSPSNSGASQDTS) shows a compositional bias: polar residues. 30–40 (LSGGLDSVTCL) serves as a coordination point for ATP. Residues Cys-220, Cys-230, Cys-233, and Cys-236 each coordinate Zn(2+).

It belongs to the QueC family. The cofactor is Zn(2+).

The enzyme catalyses 7-carboxy-7-deazaguanine + NH4(+) + ATP = 7-cyano-7-deazaguanine + ADP + phosphate + H2O + H(+). The protein operates within purine metabolism; 7-cyano-7-deazaguanine biosynthesis. Its function is as follows. Catalyzes the ATP-dependent conversion of 7-carboxy-7-deazaguanine (CDG) to 7-cyano-7-deazaguanine (preQ(0)). This chain is 7-cyano-7-deazaguanine synthase, found in Psychrobacter sp. (strain PRwf-1).